We begin with the raw amino-acid sequence, 221 residues long: Small ribosomal subunit protein eS1 (221 aa).

Belongs to the eukaryotic ribosomal protein eS1 family.

In Pyrobaculum aerophilum (strain ATCC 51768 / DSM 7523 / JCM 9630 / CIP 104966 / NBRC 100827 / IM2), this protein is Small ribosomal subunit protein eS1.